A 49-amino-acid chain; its full sequence is Large ribosomal subunit protein bL33B (49 aa).

The protein belongs to the bacterial ribosomal protein bL33 family.

The chain is Large ribosomal subunit protein bL33B from Levilactobacillus brevis (strain ATCC 367 / BCRC 12310 / CIP 105137 / JCM 1170 / LMG 11437 / NCIMB 947 / NCTC 947) (Lactobacillus brevis).